We begin with the raw amino-acid sequence, 518 residues long: Probable cytochrome P450 9h1 (518 aa).

Residue C462 coordinates heme.

The protein belongs to the cytochrome P450 family. It depends on heme as a cofactor.

Its subcellular location is the endoplasmic reticulum membrane. It localises to the microsome membrane. Functionally, may be involved in the metabolism of insect hormones and in the breakdown of synthetic insecticides. In Drosophila melanogaster (Fruit fly), this protein is Probable cytochrome P450 9h1 (Cyp9h1).